An 825-amino-acid polypeptide reads, in one-letter code: Cytosolic phospholipase A2 delta (825 aa).

Residues 14–133 (SPERLHGHPY…LPGQLLQKTF (120 aa)) form the C2 domain. Ca(2+)-binding residues include D47, D53, D103, D105, and D111. The PLA2c domain occupies 281–825 (DCCPKELSVR…SETRPLGVKT (545 aa)). Substrate is bound at residue 339-340 (GG). The active-site Nucleophile is S370. The Proton acceptor role is filled by D654.

The cofactor is Ca(2+). In terms of tissue distribution, weakly or not expressed in most tissues. Detected in placenta of 17.5 dpc embryos.

The protein localises to the cytoplasm. The protein resides in the cytosol. Its subcellular location is the membrane. It carries out the reaction a 1,2-diacyl-sn-glycero-3-phosphocholine + H2O = a 1-acyl-sn-glycero-3-phosphocholine + a fatty acid + H(+). The catalysed reaction is 1-hexadecanoyl-2-(5Z,8Z,11Z,14Z-eicosatetraenoyl)-sn-glycero-3-phosphocholine + H2O = 1-hexadecanoyl-sn-glycero-3-phosphocholine + (5Z,8Z,11Z,14Z)-eicosatetraenoate + H(+). It catalyses the reaction 1-hexadecanoyl-2-(9Z,12Z-octadecadienoyl)-sn-glycero-3-phosphocholine + H2O = (9Z,12Z)-octadecadienoate + 1-hexadecanoyl-sn-glycero-3-phosphocholine + H(+). The enzyme catalyses 1-hexadecanoyl-2-(9Z-octadecenoyl)-sn-glycero-3-phosphocholine + H2O = 1-hexadecanoyl-sn-glycero-3-phosphocholine + (9Z)-octadecenoate + H(+). It carries out the reaction 1-hexadecanoyl-2-(5Z,8Z,11Z,14Z-eicosatetraenoyl)-sn-glycero-3-phosphoethanolamine + H2O = 1-hexadecanoyl-sn-glycero-3-phosphoethanolamine + (5Z,8Z,11Z,14Z)-eicosatetraenoate + H(+). The catalysed reaction is 1-hexadecanoyl-2-(9Z,12Z-octadecadienoyl)-sn-glycero-3-phosphoethanolamine + H2O = 1-hexadecanoyl-sn-glycero-3-phosphoethanolamine + (9Z,12Z)-octadecadienoate + H(+). It catalyses the reaction 1-hexadecanoyl-sn-glycero-3-phosphocholine + H2O = sn-glycerol 3-phosphocholine + hexadecanoate + H(+). It participates in lipid metabolism; fatty acid metabolism. With respect to regulation, stimulated by cytosolic Ca(2+). Its function is as follows. Calcium-dependent phospholipase A2 that selectively hydrolyzes glycerophospholipids in the sn-2 position. Compared to its human ortholog, may have no preference for the fatty acid found at the sn-2 position. This Mus musculus (Mouse) protein is Cytosolic phospholipase A2 delta.